A 252-amino-acid chain; its full sequence is Phosphoglycolate phosphatase (252 aa).

Asp13 acts as the Nucleophile in catalysis. 3 residues coordinate Mg(2+): Asp13, Asp15, and Asp192.

This sequence belongs to the HAD-like hydrolase superfamily. CbbY/CbbZ/Gph/YieH family. In terms of assembly, monomer. Requires Mg(2+) as cofactor. The cofactor is chloride.

The enzyme catalyses 2-phosphoglycolate + H2O = glycolate + phosphate. It functions in the pathway organic acid metabolism; glycolate biosynthesis; glycolate from 2-phosphoglycolate: step 1/1. Its function is as follows. Specifically catalyzes the dephosphorylation of 2-phosphoglycolate. Is involved in the dissimilation of the intracellular 2-phosphoglycolate formed during the DNA repair of 3'-phosphoglycolate ends, a major class of DNA lesions induced by oxidative stress. In Escherichia coli O157:H7, this protein is Phosphoglycolate phosphatase.